The following is a 118-amino-acid chain: Large ribosomal subunit protein bL20 (118 aa).

The protein belongs to the bacterial ribosomal protein bL20 family.

Functionally, binds directly to 23S ribosomal RNA and is necessary for the in vitro assembly process of the 50S ribosomal subunit. It is not involved in the protein synthesizing functions of that subunit. This chain is Large ribosomal subunit protein bL20, found in Campylobacter concisus (strain 13826).